A 539-amino-acid polypeptide reads, in one-letter code: Putative serine/threonine-protein kinase L670 (539 aa).

The region spanning 1–115 is the Cyclin N-terminal domain; that stretch reads MSLFNNHPEL…ILKVFKFGLH (115 aa). Residues 258-519 form the Protein kinase domain; that stretch reads MNVIEKLGIG…VLKIFSECFV (262 aa). Residues 264–272 and Lys-285 contribute to the ATP site; that span reads LGIGSFGLV. Asp-375 functions as the Proton acceptor in the catalytic mechanism.

The protein belongs to the protein kinase superfamily. Ser/Thr protein kinase family.

It carries out the reaction L-seryl-[protein] + ATP = O-phospho-L-seryl-[protein] + ADP + H(+). The catalysed reaction is L-threonyl-[protein] + ATP = O-phospho-L-threonyl-[protein] + ADP + H(+). The polypeptide is Putative serine/threonine-protein kinase L670 (Acanthamoeba polyphaga mimivirus (APMV)).